Here is a 414-residue protein sequence, read N- to C-terminus: Serine hydroxymethyltransferase (414 aa).

Residues L118 and G122–L124 contribute to the (6S)-5,6,7,8-tetrahydrofolate site. At K227 the chain carries N6-(pyridoxal phosphate)lysine. (6S)-5,6,7,8-tetrahydrofolate is bound by residues E240 and S350–F352.

The protein belongs to the SHMT family. In terms of assembly, homodimer. Requires pyridoxal 5'-phosphate as cofactor.

The protein resides in the cytoplasm. The enzyme catalyses (6R)-5,10-methylene-5,6,7,8-tetrahydrofolate + glycine + H2O = (6S)-5,6,7,8-tetrahydrofolate + L-serine. Its pathway is one-carbon metabolism; tetrahydrofolate interconversion. It functions in the pathway amino-acid biosynthesis; glycine biosynthesis; glycine from L-serine: step 1/1. In terms of biological role, catalyzes the reversible interconversion of serine and glycine with tetrahydrofolate (THF) serving as the one-carbon carrier. This reaction serves as the major source of one-carbon groups required for the biosynthesis of purines, thymidylate, methionine, and other important biomolecules. Also exhibits THF-independent aldolase activity toward beta-hydroxyamino acids, producing glycine and aldehydes, via a retro-aldol mechanism. The polypeptide is Serine hydroxymethyltransferase (Bacillus thuringiensis (strain Al Hakam)).